A 95-amino-acid polypeptide reads, in one-letter code: Small ribosomal subunit protein bS6 (95 aa).

This sequence belongs to the bacterial ribosomal protein bS6 family.

Binds together with bS18 to 16S ribosomal RNA. This is Small ribosomal subunit protein bS6 from Bacillus pumilus (strain SAFR-032).